Consider the following 457-residue polypeptide: Argininosuccinate lyase (457 aa).

It belongs to the lyase 1 family. Argininosuccinate lyase subfamily.

The protein resides in the cytoplasm. It carries out the reaction 2-(N(omega)-L-arginino)succinate = fumarate + L-arginine. It participates in amino-acid biosynthesis; L-arginine biosynthesis; L-arginine from L-ornithine and carbamoyl phosphate: step 3/3. This Sodalis glossinidius (strain morsitans) protein is Argininosuccinate lyase.